Here is a 445-residue protein sequence, read N- to C-terminus: Methionine aminopeptidase 2 (445 aa).

A disordered region spans residues 1-80; it reads MAAQVASGVG…TSKVQTEPPR (80 aa). The span at 57–71 shows a compositional bias: basic residues; sequence AKKKKKKTKKKKKGT. Residue His-195 coordinates substrate. Positions 215, 226, and 295 each coordinate a divalent metal cation. His-303 contributes to the substrate binding site. A divalent metal cation contacts are provided by Glu-331 and Glu-426.

The protein belongs to the peptidase M24A family. Methionine aminopeptidase eukaryotic type 2 subfamily. Requires Co(2+) as cofactor. The cofactor is Zn(2+). Mn(2+) serves as cofactor. It depends on Fe(2+) as a cofactor.

The protein resides in the cytoplasm. It carries out the reaction Release of N-terminal amino acids, preferentially methionine, from peptides and arylamides.. Its function is as follows. Cotranslationally removes the N-terminal methionine from nascent proteins. The N-terminal methionine is often cleaved when the second residue in the primary sequence is small and uncharged (Met-Ala-, Cys, Gly, Pro, Ser, Thr, or Val). This Paracoccidioides brasiliensis (strain Pb03) protein is Methionine aminopeptidase 2.